A 129-amino-acid polypeptide reads, in one-letter code: Small ribosomal subunit protein uS8 (129 aa).

It belongs to the universal ribosomal protein uS8 family. In terms of assembly, part of the 30S ribosomal subunit.

Its function is as follows. One of the primary rRNA binding proteins, it binds directly to 16S rRNA central domain where it helps coordinate assembly of the platform of the 30S subunit. The chain is Small ribosomal subunit protein uS8 from Picrophilus torridus (strain ATCC 700027 / DSM 9790 / JCM 10055 / NBRC 100828 / KAW 2/3).